We begin with the raw amino-acid sequence, 559 residues long: MSKKMFIRQAGNTLLNTPLLNKGSAFTLEERKNFNLIGLLPANIETIDEQVSRAYEQFSLFNSAMEKHIYLRNIQDTNETLYFRLINQHIEEMMPIIYTPTVGEACQKFSQIYRRNRGLFLSFEDQDELEAILNNAPNTHVKVIVITDGERILGLGDQGIGGMGIPIGKLALYTACGGISPEHTLPIVLDVGTNNSALLSDPMYMGWRHPRITGDQYDDFVDDCLKAIRRRWPNALIQFEDFAQANAMPLLMRYQNQFCCFNDDIQGTASVTVGTLLAAAHATGKKLSAQKVLFAGAGSAGCGIAEAIVAQMVSEGISVQQARSQVFMVDRWGMLEQEMPNLLPFQKPLAQPASLRTEWQIEANREISLLDVIQHAHPDVLIGVTGVPGLFNQEIIEAMAEDCERPVVMPLSNPTSRVEAKPEDILMWTQGQAIVATGSPFPDVVLAGKRYPIAQCNNSYIFPGVGLGVISANAHRVTNEMLQQASITLASLSPMLNGGNMLLPPLSEIQNVSRKIALEVAKKAVEQGKASHRTEERLLERIDEEFWYAQYCEYRRIAS.

The active-site Proton donor is Tyr98. Residue Arg151 participates in NAD(+) binding. Lys169 functions as the Proton acceptor in the catalytic mechanism. Residues Glu240, Asp241, and Asp264 each coordinate a divalent metal cation. Residues Asp264 and Asn413 each contribute to the NAD(+) site.

It belongs to the malic enzymes family. Homotetramer. It depends on Mg(2+) as a cofactor. Mn(2+) serves as cofactor.

It carries out the reaction (S)-malate + NAD(+) = pyruvate + CO2 + NADH. It catalyses the reaction oxaloacetate + H(+) = pyruvate + CO2. In Vibrio vulnificus (strain YJ016), this protein is NAD-dependent malic enzyme 2.